The chain runs to 225 residues: LexA repressor (225 aa).

The H-T-H motif DNA-binding region spans 26–46; that stretch reads YEEMKDSLNLKSKSGIHRLIS. Residues S146 and K184 each act as for autocatalytic cleavage activity in the active site.

The protein belongs to the peptidase S24 family. As to quaternary structure, homodimer.

It catalyses the reaction Hydrolysis of Ala-|-Gly bond in repressor LexA.. In terms of biological role, represses a number of genes involved in the response to DNA damage (SOS response), including recA and lexA. In the presence of single-stranded DNA, RecA interacts with LexA causing an autocatalytic cleavage which disrupts the DNA-binding part of LexA, leading to derepression of the SOS regulon and eventually DNA repair. This is LexA repressor from Pelagibacter ubique (strain HTCC1062).